Here is a 156-residue protein sequence, read N- to C-terminus: ATP synthase subunit b (156 aa).

Residues 7-27 (FFAQMVVFFILWWVVAKFIWP) form a helical membrane-spanning segment.

The protein belongs to the ATPase B chain family. As to quaternary structure, F-type ATPases have 2 components, F(1) - the catalytic core - and F(0) - the membrane proton channel. F(1) has five subunits: alpha(3), beta(3), gamma(1), delta(1), epsilon(1). F(0) has three main subunits: a(1), b(2) and c(10-14). The alpha and beta chains form an alternating ring which encloses part of the gamma chain. F(1) is attached to F(0) by a central stalk formed by the gamma and epsilon chains, while a peripheral stalk is formed by the delta and b chains.

It is found in the cell inner membrane. Functionally, f(1)F(0) ATP synthase produces ATP from ADP in the presence of a proton or sodium gradient. F-type ATPases consist of two structural domains, F(1) containing the extramembraneous catalytic core and F(0) containing the membrane proton channel, linked together by a central stalk and a peripheral stalk. During catalysis, ATP synthesis in the catalytic domain of F(1) is coupled via a rotary mechanism of the central stalk subunits to proton translocation. Component of the F(0) channel, it forms part of the peripheral stalk, linking F(1) to F(0). The sequence is that of ATP synthase subunit b from Cupriavidus taiwanensis (strain DSM 17343 / BCRC 17206 / CCUG 44338 / CIP 107171 / LMG 19424 / R1) (Ralstonia taiwanensis (strain LMG 19424)).